Reading from the N-terminus, the 365-residue chain is MINLGDKQSTIVVAMSGGVDSSAVAAMLHEQGHNVIGITLQLYDHGMAVGKKNSCCAGQDIYDAKMVANKLGIPHYVLDYESKFKESVIDNFVDSYLQGETPLPCVQCNKSVKFRDLIKTARELGADKLATGHYVRKINGDNGAELHTGLDPAKDQSYFLFMTTKEQLEYLRFPLGGLTKGETRKLASKFGLEVADKPDSQDICFIPDGNYKSVINKIRPNSSESGKIIHVNGFELGEHSGIINYTIGQRRGLGIAYNEPLYVVKIDPKDNIVYVGPESALNVQEFIIRDVNWLADEIKDNEKLEVAVKIRSTRPPRLAEISKLGDDKMKVKFLCEEKAVAPGQACVIYAGERVLGGGWITREIR.

ATP is bound by residues 14 to 21 and Leu40; that span reads AMSGGVDS. The Nucleophile role is filled by Cys108. The cysteines at positions 108 and 204 are disulfide-linked. An ATP-binding site is contributed by Gly132. Positions 154–156 are interaction with tRNA; the sequence is KDQ. The Cysteine persulfide intermediate role is filled by Cys204.

The protein belongs to the MnmA/TRMU family.

The protein localises to the cytoplasm. It carries out the reaction S-sulfanyl-L-cysteinyl-[protein] + uridine(34) in tRNA + AH2 + ATP = 2-thiouridine(34) in tRNA + L-cysteinyl-[protein] + A + AMP + diphosphate + H(+). In terms of biological role, catalyzes the 2-thiolation of uridine at the wobble position (U34) of tRNA, leading to the formation of s(2)U34. In Rickettsia peacockii (strain Rustic), this protein is tRNA-specific 2-thiouridylase MnmA.